The chain runs to 235 residues: Large ribosomal subunit protein uL1c (235 aa).

It belongs to the universal ribosomal protein uL1 family. In terms of assembly, part of the 50S ribosomal subunit.

It is found in the plastid. The protein resides in the chloroplast. Its function is as follows. Binds directly to 23S rRNA. Might be involved in E site tRNA release (Potential). This chain is Large ribosomal subunit protein uL1c (rpl1), found in Gracilaria tenuistipitata var. liui (Red alga).